A 74-amino-acid polypeptide reads, in one-letter code: Small integral membrane protein 15 (74 aa).

A helical membrane pass occupies residues 20-40 (YGFLTTVILALTPLFLASAVL). Residues 42–74 (WKLAKMIEAREKEQKKKQKRQENIAKAKRLKKD) are a coiled coil. Positions 55–66 (QKKKQKRQENIA) are enriched in basic and acidic residues. The disordered stretch occupies residues 55 to 74 (QKKKQKRQENIAKAKRLKKD).

This sequence belongs to the SMIM15 family.

The protein resides in the membrane. This Homo sapiens (Human) protein is Small integral membrane protein 15 (SMIM15).